We begin with the raw amino-acid sequence, 93 residues long: Small ribosomal subunit protein uS19 (93 aa).

The segment at 72 to 93 (GEFSPTRTYRGHNKKDKKMQKK) is disordered. The span at 80-93 (YRGHNKKDKKMQKK) shows a compositional bias: basic residues.

Belongs to the universal ribosomal protein uS19 family.

In terms of biological role, protein S19 forms a complex with S13 that binds strongly to the 16S ribosomal RNA. This is Small ribosomal subunit protein uS19 from Aster yellows witches'-broom phytoplasma (strain AYWB).